Consider the following 475-residue polypeptide: UDP-N-acetylmuramate--L-alanine ligase (475 aa).

An ATP-binding site is contributed by 119 to 125 (GTHGKTT).

Belongs to the MurCDEF family.

It localises to the cytoplasm. The enzyme catalyses UDP-N-acetyl-alpha-D-muramate + L-alanine + ATP = UDP-N-acetyl-alpha-D-muramoyl-L-alanine + ADP + phosphate + H(+). Its pathway is cell wall biogenesis; peptidoglycan biosynthesis. Functionally, cell wall formation. In Wigglesworthia glossinidia brevipalpis, this protein is UDP-N-acetylmuramate--L-alanine ligase.